A 351-amino-acid polypeptide reads, in one-letter code: Anthranilate phosphoribosyltransferase (351 aa).

Residues Gly-84, 87–88, 95–98, 113–121, and Ala-125 contribute to the 5-phospho-alpha-D-ribose 1-diphosphate site; these read GD, NISS, and KHGNRGASS. Residue Gly-84 coordinates anthranilate. Ser-97 lines the Mg(2+) pocket. Asn-116 lines the anthranilate pocket. Arg-171 contributes to the anthranilate binding site. 2 residues coordinate Mg(2+): Asp-229 and Lys-230.

The protein belongs to the anthranilate phosphoribosyltransferase family. As to quaternary structure, homodimer. It depends on Mg(2+) as a cofactor.

The enzyme catalyses N-(5-phospho-beta-D-ribosyl)anthranilate + diphosphate = 5-phospho-alpha-D-ribose 1-diphosphate + anthranilate. Its pathway is amino-acid biosynthesis; L-tryptophan biosynthesis; L-tryptophan from chorismate: step 2/5. Functionally, catalyzes the transfer of the phosphoribosyl group of 5-phosphorylribose-1-pyrophosphate (PRPP) to anthranilate to yield N-(5'-phosphoribosyl)-anthranilate (PRA). The polypeptide is Anthranilate phosphoribosyltransferase (Clavibacter michiganensis subsp. michiganensis (strain NCPPB 382)).